The following is a 375-amino-acid chain: Probable dipeptidase PepE (375 aa).

The next 2 membrane-spanning stretches (helical) occupy residues 15-35 (LALA…ITPG) and 55-75 (LVLP…LAAL). Mn(2+)-binding residues include Asp-230, Asp-242, His-306, Glu-335, and Glu-349.

This sequence belongs to the peptidase M24B family. It depends on Mn(2+) as a cofactor.

It is found in the cell membrane. This is Probable dipeptidase PepE (pepE) from Mycobacterium bovis (strain ATCC BAA-935 / AF2122/97).